Reading from the N-terminus, the 354-residue chain is Replication factor C subunit 3 (354 aa).

41-48 (GPSGSGKK) is a binding site for ATP.

This sequence belongs to the activator 1 small subunits family. In terms of assembly, heterotetramer of subunits RFC2, RFC3, RFC4 and RFC5 that can form a complex with RFC1.

It is found in the nucleus. Its function is as follows. May be involved in DNA replication and thus regulate cell proliferation. The protein is Replication factor C subunit 3 (RFC3) of Arabidopsis thaliana (Mouse-ear cress).